A 61-amino-acid chain; its full sequence is Putative antitoxin RelB2 (61 aa).

In terms of biological role, antitoxin component of a type II toxin-antitoxin (TA) system. Its cognate toxin is RelE2 (Potential). The sequence is that of Putative antitoxin RelB2 (relB2) from Methanocaldococcus jannaschii (strain ATCC 43067 / DSM 2661 / JAL-1 / JCM 10045 / NBRC 100440) (Methanococcus jannaschii).